We begin with the raw amino-acid sequence, 538 residues long: Chaperonin GroEL 1 (538 aa).

ATP-binding positions include 29–32 (TLGP), 86–90 (DGTTT), G413, 478–480 (NAA), and D494.

Belongs to the chaperonin (HSP60) family. In terms of assembly, forms a cylinder of 14 subunits composed of two heptameric rings stacked back-to-back. Interacts with the co-chaperonin GroES.

It localises to the cytoplasm. It carries out the reaction ATP + H2O + a folded polypeptide = ADP + phosphate + an unfolded polypeptide.. Functionally, together with its co-chaperonin GroES, plays an essential role in assisting protein folding. The GroEL-GroES system forms a nano-cage that allows encapsulation of the non-native substrate proteins and provides a physical environment optimized to promote and accelerate protein folding. This Corynebacterium glutamicum (strain ATCC 13032 / DSM 20300 / JCM 1318 / BCRC 11384 / CCUG 27702 / LMG 3730 / NBRC 12168 / NCIMB 10025 / NRRL B-2784 / 534) protein is Chaperonin GroEL 1.